We begin with the raw amino-acid sequence, 265 residues long: Ubiquinone biosynthesis protein COQ4 homolog, mitochondrial (265 aa).

Positions 162, 163, 166, and 178 each coordinate Zn(2+).

This sequence belongs to the COQ4 family. As to quaternary structure, component of a multi-subunit COQ enzyme complex. Zn(2+) is required as a cofactor.

The protein resides in the mitochondrion inner membrane. The enzyme catalyses a 4-hydroxy-3-methoxy-5-(all-trans-polyprenyl)benzoate + H(+) = a 2-methoxy-6-(all-trans-polyprenyl)phenol + CO2. Its pathway is cofactor biosynthesis; ubiquinone biosynthesis. Lyase that catalyzes the C1-decarboxylation of 4-hydroxy-3-methoxy-5-(all-trans-polyprenyl)benzoic acid into 2-methoxy-6-(all-trans-polyprenyl)phenol during ubiquinone biosynthesis. This chain is Ubiquinone biosynthesis protein COQ4 homolog, mitochondrial, found in Drosophila willistoni (Fruit fly).